The chain runs to 544 residues: Chaperonin GroEL 1 (544 aa).

ATP contacts are provided by residues 29–32, 86–90, G413, 479–481, and D495; these read TLGP, DGTTT, and NAA. The interval 525-544 is disordered; that stretch reads PEPKDNAPAGAGAGGGDFDY. Residues 535 to 544 are compositionally biased toward gly residues; that stretch reads AGAGGGDFDY.

This sequence belongs to the chaperonin (HSP60) family. In terms of assembly, forms a cylinder of 14 subunits composed of two heptameric rings stacked back-to-back. Interacts with the co-chaperonin GroES.

The protein resides in the cytoplasm. The enzyme catalyses ATP + H2O + a folded polypeptide = ADP + phosphate + an unfolded polypeptide.. Together with its co-chaperonin GroES, plays an essential role in assisting protein folding. The GroEL-GroES system forms a nano-cage that allows encapsulation of the non-native substrate proteins and provides a physical environment optimized to promote and accelerate protein folding. This is Chaperonin GroEL 1 from Nostoc sp. (strain PCC 7120 / SAG 25.82 / UTEX 2576).